Reading from the N-terminus, the 323-residue chain is MADGDSGSERGGSSGGPGGFSQHMSREQETQELATKRLDIQNKRFYLDVKQNAKGRFIKIAEVGAGGSKSRLTLSMGVAAEFRDYLGDFIEHYAQLGPSSPEQIAQASGEDGAGGPGGPRRALKSEFLVRENRKYYLDLKENQRGRFLRIRQTINRGPGFSGGAGGGAGLQSGQTIALPAQGLIEFRDALAKLIDDYGGEDDEGVGLGGAGGGGGGGMYGELPEGTSITVDSKRFFFDVGSNKYGVFLRVSEVKPSYRNSITVPLKAWGKFGGAFCRYSEEMKEIQERQRDKMYERRGPGDRERSLGPGGGGDDSETEDVDDD.

Disordered regions lie at residues 1 to 34 (MADG…QELA), 100 to 122 (SPEQ…PRRA), and 286 to 323 (QERQ…VDDD). At Ala2 the chain carries N-acetylalanine. The segment covering 9–19 (ERGGSSGGPGG) has biased composition (gly residues). Basic and acidic residues predominate over residues 24-34 (MSREQETQELA). The DNA-binding stretch occupies residues 27–257 (EQETQELATK…LRVSEVKPSY (231 aa)). Positions 286 to 305 (QERQRDKMYERRGPGDRERS) are enriched in basic and acidic residues. Positions 313-323 (DDSETEDVDDD) are enriched in acidic residues.

Belongs to the PUR DNA-binding protein family.

It localises to the nucleus. Transcriptional regulator which can act as an activator or a repressor. This is Transcriptional regulator protein Pur-beta-A (purb-a) from Xenopus laevis (African clawed frog).